Here is a 76-residue protein sequence, read N- to C-terminus: Attractin (76 aa).

Residues 1-18 form the signal peptide; it reads MKVAIIILSLALVAAVFA. 3 cysteine pairs are disulfide-bonded: C22–C59, C31–C51, and C38–C44. Residue N26 is glycosylated (N-linked (GlcNAc...) asparagine).

As to quaternary structure, binds to temptin and enticin. As to expression, produced by the albumen gland of the egg cordons.

Its subcellular location is the secreted. Functionally, water-borne pheromone that attract the marine mollusk Aplysia into breeding aggregations and coordinate male and female reproductive behavior within the aggregation. This Aplysia californica (California sea hare) protein is Attractin (ATT).